The following is a 381-amino-acid chain: Chaperone protein DnaJ (381 aa).

The region spanning 5 to 70 is the J domain; it reads DYYEVLGVSR…DKKAAYDRYG (66 aa). The CR-type zinc finger occupies 140–218; the sequence is GVQKTINVPA…CHGAGRVEKE (79 aa). Zn(2+) contacts are provided by Cys-153, Cys-156, Cys-170, Cys-173, Cys-192, Cys-195, Cys-206, and Cys-209. 4 CXXCXGXG motif repeats span residues 153–160, 170–177, 192–199, and 206–213; these read CDACKGTG, CPTCSGMG, CPTCNGMG, and CKVCHGAG.

The protein belongs to the DnaJ family. As to quaternary structure, homodimer. Requires Zn(2+) as cofactor.

The protein localises to the cytoplasm. Its function is as follows. Participates actively in the response to hyperosmotic and heat shock by preventing the aggregation of stress-denatured proteins and by disaggregating proteins, also in an autonomous, DnaK-independent fashion. Unfolded proteins bind initially to DnaJ; upon interaction with the DnaJ-bound protein, DnaK hydrolyzes its bound ATP, resulting in the formation of a stable complex. GrpE releases ADP from DnaK; ATP binding to DnaK triggers the release of the substrate protein, thus completing the reaction cycle. Several rounds of ATP-dependent interactions between DnaJ, DnaK and GrpE are required for fully efficient folding. Also involved, together with DnaK and GrpE, in the DNA replication of plasmids through activation of initiation proteins. The sequence is that of Chaperone protein DnaJ from Cereibacter sphaeroides (strain KD131 / KCTC 12085) (Rhodobacter sphaeroides).